Here is a 480-residue protein sequence, read N- to C-terminus: Cysteine--tRNA ligase (480 aa).

Zn(2+) is bound at residue cysteine 27. Residues 29 to 39 carry the 'HIGH' region motif; it reads PTVYNYAHIGN. The Zn(2+) site is built by cysteine 221, histidine 246, and glutamate 250. The short motif at 278–282 is the 'KMSKS' region element; it reads KMSKS. An ATP-binding site is contributed by lysine 281.

Belongs to the class-I aminoacyl-tRNA synthetase family. Monomer. The cofactor is Zn(2+).

Its subcellular location is the cytoplasm. It carries out the reaction tRNA(Cys) + L-cysteine + ATP = L-cysteinyl-tRNA(Cys) + AMP + diphosphate. The protein is Cysteine--tRNA ligase of Borrelia garinii subsp. bavariensis (strain ATCC BAA-2496 / DSM 23469 / PBi) (Borreliella bavariensis).